The following is a 1396-amino-acid chain: DNA-directed RNA polymerase subunit beta' (1396 aa).

Residues cysteine 72, cysteine 74, cysteine 87, and cysteine 90 each contribute to the Zn(2+) site. Residues aspartate 463, aspartate 465, and aspartate 467 each coordinate Mg(2+). Zn(2+)-binding residues include cysteine 814, cysteine 889, cysteine 896, and cysteine 899.

The protein belongs to the RNA polymerase beta' chain family. In terms of assembly, the RNAP catalytic core consists of 2 alpha, 1 beta, 1 beta' and 1 omega subunit. When a sigma factor is associated with the core the holoenzyme is formed, which can initiate transcription. It depends on Mg(2+) as a cofactor. Zn(2+) is required as a cofactor.

The enzyme catalyses RNA(n) + a ribonucleoside 5'-triphosphate = RNA(n+1) + diphosphate. DNA-dependent RNA polymerase catalyzes the transcription of DNA into RNA using the four ribonucleoside triphosphates as substrates. The protein is DNA-directed RNA polymerase subunit beta' of Chlamydia trachomatis serovar A (strain ATCC VR-571B / DSM 19440 / HAR-13).